The chain runs to 144 residues: Large ribosomal subunit protein uL15 (144 aa).

The disordered stretch occupies residues 1–57 (MRLNTLSPAAGSKHAPKRVGRGIGSGLGKTGGRGHKGQKSRSGGKVRPGFEGGQMPL). The span at 21-31 (RGIGSGLGKTG) shows a compositional bias: gly residues. A compositionally biased stretch (basic residues) spans 32 to 44 (GRGHKGQKSRSGG).

The protein belongs to the universal ribosomal protein uL15 family. In terms of assembly, part of the 50S ribosomal subunit.

Its function is as follows. Binds to the 23S rRNA. The protein is Large ribosomal subunit protein uL15 of Vibrio vulnificus (strain CMCP6).